A 291-amino-acid chain; its full sequence is N-acetylmannosamine kinase (291 aa).

Residues Ala5 to Lys12 and Gly132 to Ser139 each bind ATP. Zn(2+) contacts are provided by His156, Cys166, Cys168, and Cys173.

This sequence belongs to the ROK (NagC/XylR) family. NanK subfamily. As to quaternary structure, homodimer.

It catalyses the reaction an N-acyl-D-mannosamine + ATP = an N-acyl-D-mannosamine 6-phosphate + ADP + H(+). It functions in the pathway amino-sugar metabolism; N-acetylneuraminate degradation; D-fructose 6-phosphate from N-acetylneuraminate: step 2/5. Catalyzes the phosphorylation of N-acetylmannosamine (ManNAc) to ManNAc-6-P. The sequence is that of N-acetylmannosamine kinase from Escherichia fergusonii (strain ATCC 35469 / DSM 13698 / CCUG 18766 / IAM 14443 / JCM 21226 / LMG 7866 / NBRC 102419 / NCTC 12128 / CDC 0568-73).